A 224-amino-acid chain; its full sequence is ATP synthase subunit a (224 aa).

6 consecutive transmembrane segments (helical) span residues 17 to 37 (LSLN…IYWL), 72 to 92 (IFIS…FPYI), 99 to 119 (LTLT…YGWI), 125 to 145 (MFAH…MVCI), 155 to 175 (GTLA…LTLL), and 184 to 204 (YLLV…ESAV).

Belongs to the ATPase A chain family. In terms of assembly, F-type ATPases have 2 components, CF(1) - the catalytic core - and CF(0) - the membrane proton channel. CF(1) has five subunits: alpha(3), beta(3), gamma(1), delta(1), epsilon(1). CF(0) has three main subunits: a, b and c.

Its subcellular location is the mitochondrion inner membrane. Its function is as follows. Mitochondrial membrane ATP synthase (F(1)F(0) ATP synthase or Complex V) produces ATP from ADP in the presence of a proton gradient across the membrane which is generated by electron transport complexes of the respiratory chain. F-type ATPases consist of two structural domains, F(1) - containing the extramembraneous catalytic core and F(0) - containing the membrane proton channel, linked together by a central stalk and a peripheral stalk. During catalysis, ATP synthesis in the catalytic domain of F(1) is coupled via a rotary mechanism of the central stalk subunits to proton translocation. Key component of the proton channel; it may play a direct role in the translocation of protons across the membrane. The chain is ATP synthase subunit a (mt:ATPase6) from Drosophila yakuba (Fruit fly).